Here is a 588-residue protein sequence, read N- to C-terminus: Cryptochrome-1 (588 aa).

The region spanning 3–132 (VNAVHWFRKG…EVIVRISHTL (130 aa)) is the Photolyase/cryptochrome alpha/beta domain. Residue lysine 11 forms a Glycyl lysine isopeptide (Lys-Gly) (interchain with G-Cter in ubiquitin) linkage. Positions 50 to 54 (NRWRF) match the LIR 1 motif. Phosphoserine; by AMPK is present on serine 71. Residues 82-87 (DVFPRL) carry the LIR 2 motif. A Glycyl lysine isopeptide (Lys-Gly) (interchain with G-Cter in ubiquitin) cross-link involves residue lysine 107. The LIR 3 motif lies at 151–156 (KRFQTL). Lysine 159 is covalently cross-linked (Glycyl lysine isopeptide (Lys-Gly) (interchain with G-Cter in ubiquitin)). Phosphoserine; by MAPK is present on serine 247. Serine 252 is an FAD binding site. 2 short sequence motifs (LIR) span residues 255–260 (LRFGCL) and 271–276 (DLYKKV). Phosphoserine; by AMPK is present on serine 280. The short motif at 285–290 (SLYGQL) is the LIR 6 element. An FAD-binding site is contributed by glutamine 289. Lysine 329 is covalently cross-linked (Glycyl lysine isopeptide (Lys-Gly) (interchain with G-Cter in ubiquitin)). The LIR 7 motif lies at 335–339 (TGFPW). Histidine 355 contacts FAD. The tract at residues 371–470 (WISWEEGMKV…LIGVNYPKPM (100 aa)) is required for inhibition of CLOCK-BMAL1-mediated transcription. Residues 379-384 (KVFEEL) carry the LIR 8 motif. FAD is bound at residue 387–389 (DAD). Short sequence motifs (LIR) lie at residues 395-400 (GSWMWL), 411-416 (HCYCPV), and 430-435 (RRYLPV). Residues 471-493 (VNHAEASRLNIERMKQIYQQLSR) are interaction with TIMELESS. Lysine 485 participates in a covalent cross-link: Glycyl lysine isopeptide (Lys-Gly) (interchain with G-Cter in ubiquitin). 2 short sequence motifs (LIR) span residues 486–491 (QIYQQL) and 492–497 (SRYRGL). The tract at residues 511 to 588 (GGLMGYAPGE…GPKVQRQSSN (78 aa)) is disordered. Over residues 545–568 (DSQQTNPLKQGRSSMGTGLSSGKR) the composition is skewed to polar residues. Residue lysine 567 forms a Glycyl lysine isopeptide (Lys-Gly) (interchain with G-Cter in ubiquitin) linkage. Serine 570 carries the phosphoserine modification.

This sequence belongs to the DNA photolyase class-1 family. Component of the circadian core oscillator, which includes the CRY proteins, CLOCK or NPAS2, BMAL1 or BMAL2, CSNK1D and/or CSNK1E, TIMELESS, and the PER proteins. Interacts directly with TIMELESS. Interacts directly with PER1, PER2 and PER3; interaction with PER2 inhibits its ubiquitination and vice versa. Interacts with FBXL21. Interacts with FBXL3. Interacts with CLOCK-BMAL1 independently of PER2 and DNA. Interacts with HDAC1, HDAC2 and SIN3B. Interacts with nuclear receptors AR, NR1D1, NR3C1/GR, RORA and RORC; the interaction with at least NR3C1/GR is ligand dependent. Interacts with PRKDC. Interacts with the G protein subunit alpha GNAS; the interaction may block GPCR-mediated regulation of cAMP concentrations. Interacts with PRMT5. Interacts with EZH2. Interacts with MYBBP1A, DOCK7, HNRNPU, RPL7A, RPL8 and RPS3. Interacts with PPP5C (via TPR repeats). Interacts with MAP1LC3B. Interacts with CLOCK. Interacts with BMAL1. Interacts weakly with HDAC3; this interaction is enhanced in the presence of FBXL3. Interacts with TRIM28, KCTD5 and DDB1. Interacts with FOXO1. Interacts with DTL and DDB1-CUL4A complex. Interacts with HNF4A. Interacts with PSMD2 in a KDM8-dependent manner. Interacts with KDM8 in a FBXL3-dependent manner. Interacts with PPARG in a ligand-dependent manner. Interacts with PPARD (via domain NR LBD) and NR1I2 (via domain NR LBD) in a ligand-dependent manner. Interacts with PPARA, NR1I3 and VDR. FAD serves as cofactor. (6R)-5,10-methylene-5,6,7,8-tetrahydrofolate is required as a cofactor. In terms of processing, phosphorylation on Ser-247 by MAPK is important for the inhibition of CLOCK-BMAL1-mediated transcriptional activity. Phosphorylation by CSNK1E requires interaction with PER1 or PER2. Phosphorylation at Ser-71 and Ser-280 by AMPK decreases protein stability. Phosphorylation at Ser-570 exhibits a robust circadian rhythm with a peak at CT8, increases protein stability, prevents SCF(FBXL3)-mediated degradation and is antagonized by interaction with PRKDC. Ubiquitinated by the SCF(FBXL3) and SCF(FBXL21) complexes, regulating the balance between degradation and stabilization. The SCF(FBXL3) complex is mainly nuclear and mediates ubiquitination and subsequent degradation of CRY1. In contrast, cytoplasmic SCF(FBXL21) complex-mediated ubiquitination leads to stabilize CRY1 and counteract the activity of the SCF(FBXL3) complex. The SCF(FBXL3) and SCF(FBXL21) complexes probably mediate ubiquitination at different Lys residues. Ubiquitination at Lys-11 and Lys-107 are specifically ubiquitinated by the SCF(FBXL21) complex but not by the SCF(FBXL3) complex. Ubiquitination may be inhibited by PER2. Deubiquitinated by USP7. Post-translationally, undergoes autophagy-mediated degradation in the liver in a time-dependent manner. Autophagic degradation of CRY1 (an inhibitor of gluconeogenesis) occurs during periods of reduced feeding allowing induction of gluconeogenesis and maintenance of blood glucose levels.

The protein resides in the cytoplasm. Its subcellular location is the nucleus. In terms of biological role, transcriptional repressor which forms a core component of the circadian clock. The circadian clock, an internal time-keeping system, regulates various physiological processes through the generation of approximately 24 hour circadian rhythms in gene expression, which are translated into rhythms in metabolism and behavior. It is derived from the Latin roots 'circa' (about) and 'diem' (day) and acts as an important regulator of a wide array of physiological functions including metabolism, sleep, body temperature, blood pressure, endocrine, immune, cardiovascular, and renal function. Consists of two major components: the central clock, residing in the suprachiasmatic nucleus (SCN) of the brain, and the peripheral clocks that are present in nearly every tissue and organ system. Both the central and peripheral clocks can be reset by environmental cues, also known as Zeitgebers (German for 'timegivers'). The predominant Zeitgeber for the central clock is light, which is sensed by retina and signals directly to the SCN. The central clock entrains the peripheral clocks through neuronal and hormonal signals, body temperature and feeding-related cues, aligning all clocks with the external light/dark cycle. Circadian rhythms allow an organism to achieve temporal homeostasis with its environment at the molecular level by regulating gene expression to create a peak of protein expression once every 24 hours to control when a particular physiological process is most active with respect to the solar day. Transcription and translation of core clock components (CLOCK, NPAS2, BMAL1, BMAL2, PER1, PER2, PER3, CRY1 and CRY2) plays a critical role in rhythm generation, whereas delays imposed by post-translational modifications (PTMs) are important for determining the period (tau) of the rhythms (tau refers to the period of a rhythm and is the length, in time, of one complete cycle). A diurnal rhythm is synchronized with the day/night cycle, while the ultradian and infradian rhythms have a period shorter and longer than 24 hours, respectively. Disruptions in the circadian rhythms contribute to the pathology of cardiovascular diseases, cancer, metabolic syndromes and aging. A transcription/translation feedback loop (TTFL) forms the core of the molecular circadian clock mechanism. Transcription factors, CLOCK or NPAS2 and BMAL1 or BMAL2, form the positive limb of the feedback loop, act in the form of a heterodimer and activate the transcription of core clock genes and clock-controlled genes (involved in key metabolic processes), harboring E-box elements (5'-CACGTG-3') within their promoters. The core clock genes: PER1/2/3 and CRY1/2 which are transcriptional repressors form the negative limb of the feedback loop and interact with the CLOCK|NPAS2-BMAL1|BMAL2 heterodimer inhibiting its activity and thereby negatively regulating their own expression. This heterodimer also activates nuclear receptors NR1D1/2 and RORA/B/G, which form a second feedback loop and which activate and repress BMAL1 transcription, respectively. CRY1 and CRY2 have redundant functions but also differential and selective contributions at least in defining the pace of the SCN circadian clock and its circadian transcriptional outputs. More potent transcriptional repressor in cerebellum and liver than CRY2, though more effective in lengthening the period of the SCN oscillator. On its side, CRY2 seems to play a critical role in tuning SCN circadian period by opposing the action of CRY1. With CRY2, is dispensable for circadian rhythm generation but necessary for the development of intercellular networks for rhythm synchrony. Capable of translocating circadian clock core proteins such as PER proteins to the nucleus. Interacts with CLOCK-BMAL1 independently of PER proteins and is found at CLOCK-BMAL1-bound sites, suggesting that CRY may act as a molecular gatekeeper to maintain CLOCK-BMAL1 in a poised and repressed state until the proper time for transcriptional activation. Represses the CLOCK-BMAL1 induced transcription of BHLHE40/DEC1, ATF4, MTA1, KLF10 and NAMPT. May repress circadian target genes expression in collaboration with HDAC1 and HDAC2 through histone deacetylation. Mediates the clock-control activation of ATR and modulates ATR-mediated DNA damage checkpoint. In liver, mediates circadian regulation of cAMP signaling and gluconeogenesis by binding to membrane-coupled G proteins and blocking glucagon-mediated increases in intracellular cAMP concentrations and CREB1 phosphorylation. Inhibits hepatic gluconeogenesis by decreasing nuclear FOXO1 levels that down-regulates gluconeogenic gene expression. Besides its role in the maintenance of the circadian clock, is also involved in the regulation of other processes. Represses glucocorticoid receptor NR3C1/GR-induced transcriptional activity by binding to glucocorticoid response elements (GREs). Plays a key role in glucose and lipid metabolism modulation, in part, through the transcriptional regulation of genes involved in these pathways, such as LEP or ACSL4. Represses PPARD and its target genes in the skeletal muscle and limits exercise capacity. Plays an essential role in the generation of circadian rhythms in the retina. Represses the transcriptional activity of NR1I2. The chain is Cryptochrome-1 (Cry1) from Rattus norvegicus (Rat).